The primary structure comprises 213 residues: Achelase-1 (213 aa).

Residues 1–213 (IVGGSVTTIG…RYTSWIQSNA (213 aa)) enclose the Peptidase S1 domain. Cys26 and Cys42 are joined by a disulfide. Residues His41 and Asp86 each act as charge relay system in the active site. An intrachain disulfide couples Cys155 to Cys172. The active-site Charge relay system is the Ser188.

This sequence belongs to the peptidase S1 family. As to expression, hemolymph and saliva of the larval form (caterpillar).

The protein resides in the secreted. It is found in the extracellular space. Sensitive to serine proteinase inhibitors and thiol proteinase inhibitors. Its function is as follows. Fibrinolytic activity; shows preferential cleavage of Arg-Gly bonds in all three fibrinogen chains. Contact with the caterpillars causes severe bleeding, due the anticoagulant effect of the protein. In Lonomia achelous (Giant silkworm moth), this protein is Achelase-1.